A 259-amino-acid polypeptide reads, in one-letter code: Global transcriptional regulator CodY (259 aa).

The segment at 1 to 155 is GAF domain; that stretch reads MALLQKTRII…GATVVGMEIL (155 aa). Positions 203 to 222 form a DNA-binding region, H-T-H motif; that stretch reads ASKIADRVGITRSVIVNALR. Ser215 is modified (phosphoserine).

It belongs to the CodY family.

It is found in the cytoplasm. DNA-binding global transcriptional regulator which is involved in the adaptive response to starvation and acts by directly or indirectly controlling the expression of numerous genes in response to nutrient availability. During rapid exponential growth, CodY is highly active and represses genes whose products allow adaptation to nutrient depletion. This chain is Global transcriptional regulator CodY, found in Bacillus velezensis (strain DSM 23117 / BGSC 10A6 / LMG 26770 / FZB42) (Bacillus amyloliquefaciens subsp. plantarum).